Here is a 428-residue protein sequence, read N- to C-terminus: Putative UPF0496 protein 5 (428 aa).

Positions 1 to 14 are enriched in basic residues; the sequence is MGNRHGIMRPRRLA. Residues 1–40 are disordered; sequence MGNRHGIMRPRRLASGRSAAAAEEEGEDGEGEPGSYEAAC. Positions 22 to 31 are enriched in acidic residues; sequence AEEEGEDGEG. Helical transmembrane passes span 229–249 and 252–272; these read IVFL…AAIA and PVAA…GKWM.

This sequence belongs to the UPF0496 family.

The protein localises to the membrane. In Oryza sativa subsp. indica (Rice), this protein is Putative UPF0496 protein 5.